Here is a 288-residue protein sequence, read N- to C-terminus: NADPH-dependent aldehyde reductase 1, chloroplastic (288 aa).

Over residues 1–18 (MASEKQKQHAQPGKEHVM) the composition is skewed to basic and acidic residues. Positions 1 to 32 (MASEKQKQHAQPGKEHVMESSPQFSSSDYQPS) are disordered. Polar residues predominate over residues 20–32 (SSPQFSSSDYQPS). 47 to 71 (SGIGRAVGYCFASEGATVAFTYVKG) contacts NADP(+). A substrate-binding site is contributed by serine 179. Tyrosine 192 (proton acceptor) is an active-site residue.

This sequence belongs to the short-chain dehydrogenases/reductases (SDR) family.

The protein localises to the plastid. It is found in the chloroplast. Aldehyde reductase that catalyzes the reduction of the aldehyde carbonyl groups on saturated and alpha,beta-unsaturated aldehydes with more than 5 carbons. No activity on alpha,beta-unsaturated ketones. Can use propionaldehyde, butyraldehyde, methylglyoxal, (e)-2-pentenal, (E)-2-hexenal, (Z)-3-hexenal and (E)-2-nonenal as substrates, but not propenal (acrolein), crotonaldehyde, 2-butanone, 3-buten-2-one or 1-penten-3-one. May act as a short alcohol-polyol-sugar dehydrogenase possibly related to carbohydrate metabolism and the acquisition of desiccation tolerance. May also be involved in signal transduction. This chain is NADPH-dependent aldehyde reductase 1, chloroplastic, found in Arabidopsis thaliana (Mouse-ear cress).